Reading from the N-terminus, the 569-residue chain is Potassium-transporting ATPase potassium-binding subunit (569 aa).

The next 10 membrane-spanning stretches (helical) occupy residues 3-23, 68-88, 136-156, 179-199, 259-279, 284-304, 384-404, 422-442, 490-510, and 534-554; these read LMEYTQLALFLGLLALMSPVL, AASLCAFSAAGFLMTFGVLML, VGLAYHNFVSAAAGLAVAVAV, VLYVLLPISLVLAVVLVGQGV, LQMLAIFIIPSSLVFTLGEAV, HAWTVWFVMACLFMVGTLSLY, GLYGMVLFILLTVFLAGLMVG, AMLALIIAATPPLLFSAVAAV, LALAMLIGRFGVMLPMLGVAG, and LLLTLVIVIVGALTYLPALAL.

Belongs to the KdpA family. The system is composed of three essential subunits: KdpA, KdpB and KdpC.

The protein localises to the cell inner membrane. Its function is as follows. Part of the high-affinity ATP-driven potassium transport (or Kdp) system, which catalyzes the hydrolysis of ATP coupled with the electrogenic transport of potassium into the cytoplasm. This subunit binds the periplasmic potassium ions and delivers the ions to the membrane domain of KdpB through an intramembrane tunnel. This chain is Potassium-transporting ATPase potassium-binding subunit, found in Nitratidesulfovibrio vulgaris (strain DP4) (Desulfovibrio vulgaris).